The following is a 306-amino-acid chain: MSTLGHQYDNSLVSNAFGFLRLPMNFQPYDSDADWVITGVPFDMATSGRAGGRHGPAAIRQVSTNLAWEHNRFPWNFDMRERLNVVDCGDLVYAFGDAREMSEKLQAHAEKLLAAGKRMLSFGGDHFVTLPLLRAHAKHFGKMALVHFDAHTDTYANGCEFDHGTMFYTAPKEGLIDPNHSVQIGIRTEFDKDNGFTVLDACQVNDRSVDDVIAQVKQIVGDMPVYLTFDIDCLDPAFAPGTGTPVIGGLTSDRAIKLVRGLKDLNIVGMDVVEVAPAYDQSEITALAAATLALEMLYIQAAKKGE.

Residues His126, Asp149, His151, Asp153, Asp230, and Asp232 each contribute to the Mn(2+) site.

The protein belongs to the arginase family. Agmatinase subfamily. The cofactor is Mn(2+).

The catalysed reaction is agmatine + H2O = urea + putrescine. It functions in the pathway amine and polyamine biosynthesis; putrescine biosynthesis via agmatine pathway; putrescine from agmatine: step 1/1. Functionally, catalyzes the formation of putrescine from agmatine. The polypeptide is Agmatinase (Escherichia coli (strain K12 / DH10B)).